The primary structure comprises 209 residues: Orotate phosphoribosyltransferase (209 aa).

5-phospho-alpha-D-ribose 1-diphosphate-binding positions include Arg-96, Lys-100, His-102, and 122–130; that span reads EDLISTGGS. Ser-126 is a binding site for orotate.

It belongs to the purine/pyrimidine phosphoribosyltransferase family. PyrE subfamily. In terms of assembly, homodimer. The cofactor is Mg(2+).

The enzyme catalyses orotidine 5'-phosphate + diphosphate = orotate + 5-phospho-alpha-D-ribose 1-diphosphate. It participates in pyrimidine metabolism; UMP biosynthesis via de novo pathway; UMP from orotate: step 1/2. Functionally, catalyzes the transfer of a ribosyl phosphate group from 5-phosphoribose 1-diphosphate to orotate, leading to the formation of orotidine monophosphate (OMP). The protein is Orotate phosphoribosyltransferase of Streptococcus gordonii (strain Challis / ATCC 35105 / BCRC 15272 / CH1 / DL1 / V288).